Consider the following 553-residue polypeptide: Hydroxylamine reductase (553 aa).

Positions 3, 6, 18, and 25 each coordinate [2Fe-2S] cluster. Hybrid [4Fe-2O-2S] cluster is bound by residues His252, Glu276, Cys320, Cys408, Cys436, Cys461, Glu495, and Lys497. Cys408 carries the cysteine persulfide modification.

The protein belongs to the HCP family. It depends on [2Fe-2S] cluster as a cofactor. The cofactor is hybrid [4Fe-2O-2S] cluster.

Its subcellular location is the cytoplasm. The catalysed reaction is A + NH4(+) + H2O = hydroxylamine + AH2 + H(+). Catalyzes the reduction of hydroxylamine to form NH(3) and H(2)O. The sequence is that of Hydroxylamine reductase from Aliivibrio fischeri (strain MJ11) (Vibrio fischeri).